A 390-amino-acid polypeptide reads, in one-letter code: MESFLFTSESVNEGHPDKLCDQVSDAILDACLEQDPESKVACETCTKTNMVMVFGEITTKATVNYEKIVRDTCRGIGFTSPDVGLDADHCKVLVNIEQQSPDIAQGVHGHLSKKPEEIGAGDQGHMFGYATDETPELMPLTHVLATKLGAKLTEVRKNNTCPWLRPDGKTQVTVEYRNEGGAMVPVRVHTVLISTQHDETVTNEQIAKDLKEHVIKPVIPAQYMDDDTIFHLNPSGRFVIGGPHGDAGLTGRKIIIDTYGGWGAHGGGAFSGKDPTKVDRSGAYVVRQAAKSVVASGLARRCIVQVSYAIGVPEPLSVFVDTYKTGKIPDKDILALIKKNFDFRPGMIAINLDLKRGGNFRYQKTAAYGHFGRDDADFTWETVKILKPKA.

A Mg(2+)-binding site is contributed by glutamate 9. Histidine 15 is a binding site for ATP. A K(+)-binding site is contributed by glutamate 43. Positions 56 and 99 each coordinate L-methionine. Residues 167-169 (DGK), 235-238 (SGRF), aspartate 246, 252-253 (RK), alanine 269, lysine 273, and lysine 277 each bind ATP. L-methionine is bound at residue aspartate 246. L-methionine is bound at residue lysine 277.

Belongs to the AdoMet synthase family. In terms of assembly, homotetramer. The cofactor is Mn(2+). Mg(2+) is required as a cofactor. Co(2+) serves as cofactor. It depends on K(+) as a cofactor.

Its subcellular location is the cytoplasm. It carries out the reaction L-methionine + ATP + H2O = S-adenosyl-L-methionine + phosphate + diphosphate. It functions in the pathway amino-acid biosynthesis; S-adenosyl-L-methionine biosynthesis; S-adenosyl-L-methionine from L-methionine: step 1/1. Catalyzes the formation of S-adenosylmethionine from methionine and ATP. The reaction comprises two steps that are both catalyzed by the same enzyme: formation of S-adenosylmethionine (AdoMet) and triphosphate, and subsequent hydrolysis of the triphosphate. This chain is S-adenosylmethionine synthase 2 (SAM2), found in Actinidia chinensis var. chinensis (Chinese soft-hair kiwi).